The chain runs to 254 residues: MVPWLGPDDPFPSIERALGPATGAPGLLAASADLLPSRLIDAYLRGIFPWYSDGQPVLWWSPDPRMILVPAEFKVSPSLRKTLKRVLRAPEWEVRVDHDFAGVMRACAQAPRRGQRGTWITAEIIDAYTSLYRSGNAHSIETWHDGRRVGGLYGVSFGRMFFGESMYADVTDASKIALAALIAHLREQGLEMIDCQQNTSHLASLGGREIARKAFVAHVRSAVAEPPIPWQFDKRVLAALTSPAETAAPTGTER.

This sequence belongs to the L/F-transferase family.

It is found in the cytoplasm. It carries out the reaction N-terminal L-lysyl-[protein] + L-leucyl-tRNA(Leu) = N-terminal L-leucyl-L-lysyl-[protein] + tRNA(Leu) + H(+). It catalyses the reaction N-terminal L-arginyl-[protein] + L-leucyl-tRNA(Leu) = N-terminal L-leucyl-L-arginyl-[protein] + tRNA(Leu) + H(+). The catalysed reaction is L-phenylalanyl-tRNA(Phe) + an N-terminal L-alpha-aminoacyl-[protein] = an N-terminal L-phenylalanyl-L-alpha-aminoacyl-[protein] + tRNA(Phe). Functionally, functions in the N-end rule pathway of protein degradation where it conjugates Leu, Phe and, less efficiently, Met from aminoacyl-tRNAs to the N-termini of proteins containing an N-terminal arginine or lysine. The sequence is that of Leucyl/phenylalanyl-tRNA--protein transferase from Burkholderia orbicola (strain MC0-3).